Consider the following 647-residue polypeptide: UvrABC system protein C (647 aa).

In terms of domain architecture, GIY-YIG spans 16-95 (VEPGVYRFRD…IKEFDPRFNV (80 aa)). Positions 208-243 (DRFARELEQQMNAAAAELDFERAARLRDDLGALKRA) constitute a UVR domain.

Belongs to the UvrC family. In terms of assembly, interacts with UvrB in an incision complex.

It localises to the cytoplasm. Its function is as follows. The UvrABC repair system catalyzes the recognition and processing of DNA lesions. UvrC both incises the 5' and 3' sides of the lesion. The N-terminal half is responsible for the 3' incision and the C-terminal half is responsible for the 5' incision. This is UvrABC system protein C from Mycolicibacterium paratuberculosis (strain ATCC BAA-968 / K-10) (Mycobacterium paratuberculosis).